Reading from the N-terminus, the 279-residue chain is Lectin 9 (279 aa).

An N-terminal signal peptide occupies residues 1-23 (MALSSALIKIFITFLFLQNHVNS). N-linked (GlcNAc...) asparagine glycosylation is found at asparagine 116, asparagine 139, asparagine 235, and asparagine 272.

Belongs to the leguminous lectin family.

Its function is as follows. May be involved in arbuscular mycorrhizal (AM) symbiosis with AM fungi. The sequence is that of Lectin 9 from Medicago truncatula (Barrel medic).